We begin with the raw amino-acid sequence, 592 residues long: Aspartate--tRNA ligase (592 aa).

Glutamate 171 lines the L-aspartate pocket. Residues 195 to 198 (QLFK) form an aspartate region. Arginine 217 lines the L-aspartate pocket. ATP contacts are provided by residues 217-219 (RDE) and glutamine 226. Histidine 448 contributes to the L-aspartate binding site. Position 482 (glutamate 482) interacts with ATP. Position 489 (arginine 489) interacts with L-aspartate. ATP is bound at residue 534–537 (GLDR).

Belongs to the class-II aminoacyl-tRNA synthetase family. Type 1 subfamily. Homodimer.

Its subcellular location is the cytoplasm. It carries out the reaction tRNA(Asp) + L-aspartate + ATP = L-aspartyl-tRNA(Asp) + AMP + diphosphate. Catalyzes the attachment of L-aspartate to tRNA(Asp) in a two-step reaction: L-aspartate is first activated by ATP to form Asp-AMP and then transferred to the acceptor end of tRNA(Asp). The polypeptide is Aspartate--tRNA ligase (Vibrio vulnificus (strain YJ016)).